The sequence spans 313 residues: Ribosomal RNA small subunit methyltransferase H (313 aa).

S-adenosyl-L-methionine-binding positions include 35 to 37 (GGH), aspartate 55, phenylalanine 81, aspartate 103, and glutamine 110.

The protein belongs to the methyltransferase superfamily. RsmH family.

Its subcellular location is the cytoplasm. The catalysed reaction is cytidine(1402) in 16S rRNA + S-adenosyl-L-methionine = N(4)-methylcytidine(1402) in 16S rRNA + S-adenosyl-L-homocysteine + H(+). Functionally, specifically methylates the N4 position of cytidine in position 1402 (C1402) of 16S rRNA. The protein is Ribosomal RNA small subunit methyltransferase H of Azotobacter vinelandii (strain DJ / ATCC BAA-1303).